A 204-amino-acid chain; its full sequence is Methylthioribulose-1-phosphate dehydratase (204 aa).

Residues His94 and His96 each coordinate Zn(2+).

It belongs to the aldolase class II family. MtnB subfamily. Zn(2+) serves as cofactor.

The enzyme catalyses 5-(methylsulfanyl)-D-ribulose 1-phosphate = 5-methylsulfanyl-2,3-dioxopentyl phosphate + H2O. It functions in the pathway amino-acid biosynthesis; L-methionine biosynthesis via salvage pathway; L-methionine from S-methyl-5-thio-alpha-D-ribose 1-phosphate: step 2/6. Catalyzes the dehydration of methylthioribulose-1-phosphate (MTRu-1-P) into 2,3-diketo-5-methylthiopentyl-1-phosphate (DK-MTP-1-P). The polypeptide is Methylthioribulose-1-phosphate dehydratase (Pseudomonas syringae pv. tomato (strain ATCC BAA-871 / DC3000)).